The sequence spans 81 residues: MNQEIFDKIKNIIVDQLDVDADSVSPESNFISDLDADSLDTVELVMAFEEEFDIDIPDDVAEKITTVGEAVNIIAEKTGAN.

The Carrier domain maps to 3–78; the sequence is QEIFDKIKNI…EAVNIIAEKT (76 aa). The residue at position 38 (serine 38) is an O-(pantetheine 4'-phosphoryl)serine.

Belongs to the acyl carrier protein (ACP) family. In terms of processing, 4'-phosphopantetheine is transferred from CoA to a specific serine of apo-ACP by AcpS. This modification is essential for activity because fatty acids are bound in thioester linkage to the sulfhydryl of the prosthetic group.

Its subcellular location is the cytoplasm. Its pathway is lipid metabolism; fatty acid biosynthesis. In terms of biological role, carrier of the growing fatty acid chain in fatty acid biosynthesis. This chain is Acyl carrier protein, found in Picosynechococcus sp. (strain ATCC 27264 / PCC 7002 / PR-6) (Agmenellum quadruplicatum).